The sequence spans 365 residues: uncharacterized protein (365 aa).

A run of 3 helical transmembrane segments spans residues 105–125 (TGNW…QCWL), 151–171 (ILTT…SLTI), and 187–207 (IFLI…SLIF).

It is found in the cell membrane. This is an uncharacterized protein from Mycoplasma genitalium (strain ATCC 33530 / DSM 19775 / NCTC 10195 / G37) (Mycoplasmoides genitalium).